The following is a 65-amino-acid chain: Large ribosomal subunit protein bL35 (65 aa).

The protein belongs to the bacterial ribosomal protein bL35 family.

This Phytoplasma mali (strain AT) protein is Large ribosomal subunit protein bL35.